Here is a 253-residue protein sequence, read N- to C-terminus: RAD51-associated protein 1 (253 aa).

Residues 32–51 (APLTKKSRTQPKEPKKENKK) are interaction with DNA. 3 disordered regions span residues 33-74 (PLTK…TSLD), 141-169 (DREH…EGND), and 184-244 (KKIK…WVPP). Acidic residues predominate over residues 154 to 169 (PDEESEEDSDYREGND). The segment covering 184-195 (KKIKRQTRKEKK) has biased composition (basic residues). Residues 190 to 241 (TRKEKKTPKSENNTTVMELKSEQTQKMMSTSSEPVGRPLYTSSPVTNKKPKW) form an interaction with DNA region. A compositionally biased stretch (polar residues) spans 199-222 (SENNTTVMELKSEQTQKMMSTSSE).

Monomer.

The protein resides in the chromosome. It localises to the nucleus. Structure-specific DNA-binding protein involved in DNA repair by promoting RAD51-mediated homologous recombination. Acts by stimulating D-Loop formation by RAD51: specifically enhances joint molecule formation through its structure-specific DNA interaction and its interaction with RAD51. Binds single-stranded DNA (ssDNA), double-stranded DNA (dsDNA) and secondary DNA structures, such as D-loop structures: has a strong preference for branched-DNA structures that are obligatory intermediates during joint molecule formation. Involved in mitotic recombination-dependent replication fork processing. Also involved in meiosis by promoting DMC1-mediated homologous meiotic recombination. In Gallus gallus (Chicken), this protein is RAD51-associated protein 1.